A 317-amino-acid chain; its full sequence is Thymidylate synthase (317 aa).

DUMP contacts are provided by residues Arg-24 and 179-180; that span reads RR. Residue Cys-199 is the Nucleophile of the active site. DUMP-binding positions include 219–222, Asn-230, and 260–262; these read RSAD and HIY. (6R)-5,10-methylene-5,6,7,8-tetrahydrofolate is bound at residue Asp-222. Ala-316 contributes to the (6R)-5,10-methylene-5,6,7,8-tetrahydrofolate binding site.

This sequence belongs to the thymidylate synthase family. Bacterial-type ThyA subfamily. In terms of assembly, homodimer.

It is found in the cytoplasm. It carries out the reaction dUMP + (6R)-5,10-methylene-5,6,7,8-tetrahydrofolate = 7,8-dihydrofolate + dTMP. Its pathway is pyrimidine metabolism; dTTP biosynthesis. Its function is as follows. Catalyzes the reductive methylation of 2'-deoxyuridine-5'-monophosphate (dUMP) to 2'-deoxythymidine-5'-monophosphate (dTMP) while utilizing 5,10-methylenetetrahydrofolate (mTHF) as the methyl donor and reductant in the reaction, yielding dihydrofolate (DHF) as a by-product. This enzymatic reaction provides an intracellular de novo source of dTMP, an essential precursor for DNA biosynthesis. The sequence is that of Thymidylate synthase from Oceanobacillus iheyensis (strain DSM 14371 / CIP 107618 / JCM 11309 / KCTC 3954 / HTE831).